The following is a 146-amino-acid chain: 2S sulfur-rich seed storage protein 1 (146 aa).

The signal sequence occupies residues 1 to 22; that stretch reads MAKISVAAAALLVLMALGHATA. The propeptide occupies 23–36; that stretch reads FRATVTTTVVEEEN. The residue at position 37 (glutamine 37) is a Pyrrolidone carboxylic acid. Disulfide bonds link cysteine 40–cysteine 92, cysteine 53–cysteine 81, cysteine 82–cysteine 130, and cysteine 94–cysteine 137. The propeptide occupies 65-69; sequence PYQTM. The propeptide occupies 143-146; sequence IAGF.

It belongs to the 2S seed storage albumins family. The mature protein consists of a small and a large chain linked by disulfide bonds.

This is a 2S seed storage protein. The protein is 2S sulfur-rich seed storage protein 1 (BE2S1) of Bertholletia excelsa (Brazil nut).